Reading from the N-terminus, the 268-residue chain is Tryptophan synthase alpha chain (268 aa).

Catalysis depends on proton acceptor residues Glu49 and Asp60.

It belongs to the TrpA family. As to quaternary structure, tetramer of two alpha and two beta chains.

It carries out the reaction (1S,2R)-1-C-(indol-3-yl)glycerol 3-phosphate + L-serine = D-glyceraldehyde 3-phosphate + L-tryptophan + H2O. Its pathway is amino-acid biosynthesis; L-tryptophan biosynthesis; L-tryptophan from chorismate: step 5/5. In terms of biological role, the alpha subunit is responsible for the aldol cleavage of indoleglycerol phosphate to indole and glyceraldehyde 3-phosphate. The polypeptide is Tryptophan synthase alpha chain (Xanthomonas oryzae pv. oryzae (strain MAFF 311018)).